A 203-amino-acid chain; its full sequence is Peptide deformylase (203 aa).

Fe cation is bound by residues Cys-121 and His-163. Glu-164 is an active-site residue. His-167 contacts Fe cation.

The protein belongs to the polypeptide deformylase family. The cofactor is Fe(2+).

The catalysed reaction is N-terminal N-formyl-L-methionyl-[peptide] + H2O = N-terminal L-methionyl-[peptide] + formate. In terms of biological role, removes the formyl group from the N-terminal Met of newly synthesized proteins. Requires at least a dipeptide for an efficient rate of reaction. N-terminal L-methionine is a prerequisite for activity but the enzyme has broad specificity at other positions. This is Peptide deformylase from Prochlorococcus marinus (strain SARG / CCMP1375 / SS120).